The primary structure comprises 188 residues: Putative manganese efflux pump MntP (188 aa).

A run of 6 helical transmembrane segments spans residues 3–23 (WLTI…VALA), 39–59 (LGFH…LLGM), 65–85 (ISAY…GRMV), 104–124 (GMTM…VGLS), 125–145 (IAML…VAGV), and 167–187 (ICGG…HTLL).

Belongs to the MntP (TC 9.B.29) family.

The protein resides in the cell inner membrane. In terms of biological role, probably functions as a manganese efflux pump. The sequence is that of Putative manganese efflux pump MntP from Citrifermentans bemidjiense (strain ATCC BAA-1014 / DSM 16622 / JCM 12645 / Bem) (Geobacter bemidjiensis).